The chain runs to 188 residues: MKGLIIIGSAQVGSHTNALSKYLKGQLGEHDVEVEIFDLAEKPIHQLDFAGTTQAVDEIKNNVKSLQNKAMEADFLILGTPNYHGSFSGILKNALDHLNMDHFKMKPVGLICNSGGIVSSEPLSHLRVIVRSLLGIAVPTQIATHDSDYAKLEDGTLYLEDNEFQLRSKLFVDQIVSFVTNSPYEHLK.

Belongs to the azoreductase type 2 family. In terms of assembly, homotetramer. FMN is required as a cofactor.

Functionally, catalyzes the reductive cleavage of azo bond in aromatic azo compounds to the corresponding amines. Requires NADPH, but not NADH, as an electron donor for its activity. This Staphylococcus epidermidis (strain ATCC 12228 / FDA PCI 1200) protein is FMN-dependent NADPH-azoreductase (azo1).